A 198-amino-acid chain; its full sequence is Peptidyl-tRNA hydrolase (198 aa).

Y15 contacts tRNA. Residue H20 is the Proton acceptor of the active site. Residues F66, N68, and N114 each coordinate tRNA.

It belongs to the PTH family. Monomer.

It localises to the cytoplasm. The enzyme catalyses an N-acyl-L-alpha-aminoacyl-tRNA + H2O = an N-acyl-L-amino acid + a tRNA + H(+). Functionally, hydrolyzes ribosome-free peptidyl-tRNAs (with 1 or more amino acids incorporated), which drop off the ribosome during protein synthesis, or as a result of ribosome stalling. In terms of biological role, catalyzes the release of premature peptidyl moieties from peptidyl-tRNA molecules trapped in stalled 50S ribosomal subunits, and thus maintains levels of free tRNAs and 50S ribosomes. This chain is Peptidyl-tRNA hydrolase, found in Cupriavidus necator (strain ATCC 17699 / DSM 428 / KCTC 22496 / NCIMB 10442 / H16 / Stanier 337) (Ralstonia eutropha).